The sequence spans 630 residues: Putative lipase atg15 (630 aa).

Residues 1–20 (MKSSQRRIKRHAMRDMSIST) are Cytoplasmic-facing. A helical; Signal-anchor for type II membrane protein membrane pass occupies residues 21 to 40 (LLLSVVLLPSVVSANDHVYF). Residues 41–630 (NPPSPGSPFL…WGSDIEHYEI (590 aa)) are Lumenal-facing. 4 N-linked (GlcNAc...) asparagine glycosylation sites follow: Asn200, Asn222, Asn280, and Asn304. Ser320 serves as the catalytic Charge relay system. A glycan (N-linked (GlcNAc...) asparagine) is linked at Asn466. Residues 577–589 (SVTAPPFSTSTSS) are compositionally biased toward polar residues. The interval 577–599 (SVTAPPFSTSTSSDHVRADHSIG) is disordered.

The protein belongs to the AB hydrolase superfamily. Lipase family. As to quaternary structure, binds to both phosphatidylinositol (PI) and phosphatidylinositol 3,5-bisphosphate (PIP2).

It localises to the endosome. The protein localises to the multivesicular body membrane. It is found in the prevacuolar compartment membrane. The catalysed reaction is a triacylglycerol + H2O = a diacylglycerol + a fatty acid + H(+). Lipase which is essential for lysis of subvacuolar cytoplasm to vacuole targeted bodies and intravacuolar autophagic bodies. Involved in the lysis of intravacuolar multivesicular body (MVB) vesicles. The intravacuolar membrane disintegration by atg15 is critical to life span extension. This chain is Putative lipase atg15 (atg15), found in Aspergillus clavatus (strain ATCC 1007 / CBS 513.65 / DSM 816 / NCTC 3887 / NRRL 1 / QM 1276 / 107).